Here is a 562-residue protein sequence, read N- to C-terminus: Tubby-related protein 2 (562 aa).

The disordered stretch occupies residues 1–81; it reads MDREGPRGPR…RRGEERFQSD (81 aa). Basic and acidic residues predominate over residues 35-46; sequence QKLEQQRQLFEK. Ser152, Ser153, and Ser155 each carry phosphoserine. The interval 179–294 is disordered; the sequence is LRRGWLASPG…SNHNAWNMTC (116 aa). Thr211 carries the phosphothreonine modification. A Phosphoserine modification is found at Ser213. Basic and acidic residues predominate over residues 225–240; sequence DGDHGDLAPCKVEENT. The span at 285-294 shows a compositional bias: polar residues; it reads SNHNAWNMTC.

The protein belongs to the TUB family. As to expression, expressed in retina and testis.

The protein resides in the cytoplasm. The protein localises to the secreted. This is Tubby-related protein 2 (Tulp2) from Mus musculus (Mouse).